A 283-amino-acid polypeptide reads, in one-letter code: 1-acyl-sn-glycerol-3-phosphate acyltransferase alpha (283 aa).

A signal peptide spans 1–26; it reads MDLWPGAWMLLLLLFLLLLFLLPTLW. The Lumenal portion of the chain corresponds to 27–37; that stretch reads FCSPSAKYFFK. Residues 38–58 form a helical membrane-spanning segment; it reads MAFYNGWILFLAVLAIPVCAV. The Cytoplasmic portion of the chain corresponds to 59–127; sequence RGRNVENMKI…PGRCVPIAKR (69 aa). Positions 104–109 match the HXXXXD motif motif; that stretch reads HQSSLD. Residues 128 to 148 traverse the membrane as a helical segment; that stretch reads ELLWAGSAGLACWLAGVIFID. The Lumenal portion of the chain corresponds to 149–283; sequence RKRTGDAISV…DYLKKPGGGG (135 aa). The EGTR motif motif lies at 178-181; that stretch reads EGTR.

This sequence belongs to the 1-acyl-sn-glycerol-3-phosphate acyltransferase family. In terms of tissue distribution, widely expressed. Expressed in adipose tissue and at high levels in testis and pancreas. Expressed at lower levels in tissues such as heart, brain, placenta, kidney, lung, spleen, thymus, prostate, ovary, intestine, colon, leukocyte and liver.

It is found in the endoplasmic reticulum membrane. It carries out the reaction a 1-acyl-sn-glycero-3-phosphate + an acyl-CoA = a 1,2-diacyl-sn-glycero-3-phosphate + CoA. The enzyme catalyses 1-(9Z-octadecenoyl)-sn-glycero-3-phosphate + (9Z)-octadecenoyl-CoA = 1,2-di-(9Z-octadecenoyl)-sn-glycero-3-phosphate + CoA. It catalyses the reaction 1-(9Z-octadecenoyl)-sn-glycero-3-phosphate + hexadecanoyl-CoA = 1-(9Z)-octadecenoyl-2-hexadecanoyl-sn-glycero-3-phosphate + CoA. The catalysed reaction is heptadecanoyl-CoA + 1-(9Z-octadecenoyl)-sn-glycero-3-phosphate = 1-(9Z)-octadecenoyl-2-heptadecanoyl-sn-glycero-3-phosphate + CoA. It carries out the reaction 1-(9Z-octadecenoyl)-sn-glycero-3-phosphate + octadecanoyl-CoA = 1-(9Z-octadecenoyl)-2-octadecanoyl-sn-glycero-3-phosphate + CoA. The enzyme catalyses 1-(9Z-octadecenoyl)-sn-glycero-3-phosphate + (9Z,12Z)-octadecadienoyl-CoA = 1-(9Z)-octadecenoyl-2-(9Z,12Z)-octadecadienoyl-sn-glycero-3-phosphate + CoA. It catalyses the reaction 1-(9Z-octadecenoyl)-sn-glycero-3-phosphate + tetradecanoyl-CoA = 1-(9Z)-octadecenoyl-2-tetradecanoyl-sn-glycero-3-phosphate + CoA. The catalysed reaction is pentadecanoyl-CoA + 1-(9Z-octadecenoyl)-sn-glycero-3-phosphate = 1-(9Z)-octadecenoyl-2-pentadecanoyl-sn-glycero-3-phosphate + CoA. It carries out the reaction 1-hexadecanoyl-sn-glycero-3-phosphate + (9Z)-octadecenoyl-CoA = 1-hexadecanoyl-2-(9Z-octadecenoyl)-sn-glycero-3-phosphate + CoA. The enzyme catalyses 1-(9Z,12Z,15Z)-octadecatrienoyl-sn-glycero-3-phosphate + (9Z)-octadecenoyl-CoA = 1-(9Z,12Z,15Z)-octadecatrienoyl-2-(9Z)-octadecenoyl-sn-glycero-3-phosphate + CoA. It catalyses the reaction 1-(6Z,9Z,12Z-octadecatrienoyl)-sn-glycero-3-phosphate + (9Z)-octadecenoyl-CoA = (6Z,9Z,12Z)-octadecatrienoyl-2-(9Z)-octadecenoyl-sn-glycero-3-phosphate + CoA. The catalysed reaction is 1-eicosanoyl-sn-glycero-3-phosphate + (9Z)-octadecenoyl-CoA = 1-eicosanoyl-2-(9Z)-octadecenoyl-sn-glycero-3-phosphate + CoA. It carries out the reaction 1-tetradecanoyl-sn-glycerol 3-phosphate + (9Z)-octadecenoyl-CoA = 1-tetradecanoyl-2-(9Z)-octadecenoyl-sn-glycero-3-phosphate + CoA. The enzyme catalyses 1-(9Z-octadecenoyl)-sn-glycero-3-phosphate + (5Z,8Z,11Z,14Z)-eicosatetraenoyl-CoA = 1-(9Z)-octadecenoyl-2-(5Z,8Z,11Z,14Z)-eicosatetraenoyl-sn-glycero-3-phosphate + CoA. It catalyses the reaction 1-(9Z-octadecenoyl)-sn-glycero-3-phosphate + dodecanoyl-CoA = 1-(9Z)-octadecenoyl-2-dodecanoyl-sn-glycero-3-phosphate + CoA. The catalysed reaction is (6Z)-octadecenoyl-CoA + 1-(9Z-octadecenoyl)-sn-glycero-3-phosphate = 1-(9Z)-octadecenoyl-2-(6Z)-octadecenoyl-sn-glycero-3-phosphate + CoA. It carries out the reaction (11Z)-octadecenoyl-CoA + 1-(9Z-octadecenoyl)-sn-glycero-3-phosphate = 1-(9Z)-octadecenoyl-2-(11Z)-octadecenoyl-sn-glycero-3-phosphate + CoA. The enzyme catalyses (9Z)-hexadecenoyl-CoA + 1-(9Z-octadecenoyl)-sn-glycero-3-phosphate = 1-(9Z-octadecenoyl)-2-(9Z-hexadecenoyl)-sn-glycero-3-phosphate + CoA. Its pathway is phospholipid metabolism; CDP-diacylglycerol biosynthesis; CDP-diacylglycerol from sn-glycerol 3-phosphate: step 2/3. Functionally, converts 1-acyl-sn-glycerol-3-phosphate (lysophosphatidic acid or LPA) into 1,2-diacyl-sn-glycerol-3-phosphate (phosphatidic acid or PA) by incorporating an acyl moiety at the sn-2 position of the glycerol backbone. This Homo sapiens (Human) protein is 1-acyl-sn-glycerol-3-phosphate acyltransferase alpha (AGPAT1).